The chain runs to 297 residues: Acetylglutamate kinase (297 aa).

Substrate is bound by residues G73–G74, R95, and N188.

It belongs to the acetylglutamate kinase family. ArgB subfamily.

It is found in the cytoplasm. It catalyses the reaction N-acetyl-L-glutamate + ATP = N-acetyl-L-glutamyl 5-phosphate + ADP. The protein operates within amino-acid biosynthesis; L-arginine biosynthesis; N(2)-acetyl-L-ornithine from L-glutamate: step 2/4. Catalyzes the ATP-dependent phosphorylation of N-acetyl-L-glutamate. The polypeptide is Acetylglutamate kinase (Trichormus variabilis (strain ATCC 29413 / PCC 7937) (Anabaena variabilis)).